A 540-amino-acid polypeptide reads, in one-letter code: Chaperonin GroEL (540 aa).

Residues 29 to 32 (TLGP), 86 to 90 (DGTTT), G413, 476 to 478 (NAA), and D492 each bind ATP.

The protein belongs to the chaperonin (HSP60) family. In terms of assembly, forms a cylinder of 14 subunits composed of two heptameric rings stacked back-to-back. Interacts with the co-chaperonin GroES.

The protein resides in the cytoplasm. It carries out the reaction ATP + H2O + a folded polypeptide = ADP + phosphate + an unfolded polypeptide.. Together with its co-chaperonin GroES, plays an essential role in assisting protein folding. The GroEL-GroES system forms a nano-cage that allows encapsulation of the non-native substrate proteins and provides a physical environment optimized to promote and accelerate protein folding. The protein is Chaperonin GroEL of Tsukamurella paurometabola (Corynebacterium paurometabolum).